Reading from the N-terminus, the 211-residue chain is GLLGAPAVATYAAAPAVAYSAAPAVSTAYINQAAPVLAHAGPVAVAHAAPYAVHAPAVGASHQAIVRSLGGNQAVSHYSKAVDSAFSSVRKFDTRITNDALLHAPVAVAHAAPVVSTYAAHAPVVSSYAHAPLVSSYAAHAPLVSSYAAHAPLVSSYAAHAPVLSTAYAAHAPVVSSYAAPVVARTAAVGYSPAAVVSHTSFTGLGASYAW.

Repeat copies occupy residues 13–16 (AAPA), 21–24 (AAPA), 33–36 (AAPV), 111–114 (AAPV), and 179–182 (AAPV).

In terms of biological role, component of the cuticle of the pupa of Tenebrio molitor. This chain is Pupal cuticle protein G1A, found in Tenebrio molitor (Yellow mealworm beetle).